A 100-amino-acid chain; its full sequence is Urease subunit gamma (100 aa).

It belongs to the urease gamma subunit family. In terms of assembly, heterotrimer of UreA (gamma), UreB (beta) and UreC (alpha) subunits. Three heterotrimers associate to form the active enzyme.

The protein localises to the cytoplasm. It carries out the reaction urea + 2 H2O + H(+) = hydrogencarbonate + 2 NH4(+). It participates in nitrogen metabolism; urea degradation; CO(2) and NH(3) from urea (urease route): step 1/1. This Paraburkholderia xenovorans (strain LB400) protein is Urease subunit gamma.